The following is a 189-amino-acid chain: UPF0398 protein LCK_00599 (189 aa).

This sequence belongs to the UPF0398 family.

The sequence is that of UPF0398 protein LCK_00599 from Leuconostoc citreum (strain KM20).